A 149-amino-acid chain; its full sequence is MRCPFCTAEETKVIDSRLAADGYQIRRRRECIGCKERFTTFESAELALPYIIKNNGNREPFDLNKLEVSLNRALEKRPVHADDVDNVISKIIFQLKALGEREVPSKSVGHLAMDGLKQLDKVAYIRFASVYLSFDDIEEFTKEIEKLRE.

A zinc finger lies at 3–34 (CPFCTAEETKVIDSRLAADGYQIRRRRECIGC). One can recognise an ATP-cone domain in the interval 49–139 (PYIIKNNGNR…VYLSFDDIEE (91 aa)).

The protein belongs to the NrdR family. Zn(2+) serves as cofactor.

In terms of biological role, negatively regulates transcription of bacterial ribonucleotide reductase nrd genes and operons by binding to NrdR-boxes. This Haemophilus ducreyi (strain 35000HP / ATCC 700724) protein is Transcriptional repressor NrdR.